Reading from the N-terminus, the 362-residue chain is UDP-3-O-acylglucosamine N-acyltransferase 1 (362 aa).

Histidine 258 acts as the Proton acceptor in catalysis.

This sequence belongs to the transferase hexapeptide repeat family. LpxD subfamily. Homotrimer.

It catalyses the reaction a UDP-3-O-[(3R)-3-hydroxyacyl]-alpha-D-glucosamine + a (3R)-hydroxyacyl-[ACP] = a UDP-2-N,3-O-bis[(3R)-3-hydroxyacyl]-alpha-D-glucosamine + holo-[ACP] + H(+). It participates in bacterial outer membrane biogenesis; LPS lipid A biosynthesis. In terms of biological role, catalyzes the N-acylation of UDP-3-O-acylglucosamine using 3-hydroxyacyl-ACP as the acyl donor. Is involved in the biosynthesis of lipid A, a phosphorylated glycolipid that anchors the lipopolysaccharide to the outer membrane of the cell. The sequence is that of UDP-3-O-acylglucosamine N-acyltransferase 1 from Nitrobacter winogradskyi (strain ATCC 25391 / DSM 10237 / CIP 104748 / NCIMB 11846 / Nb-255).